Here is a 193-residue protein sequence, read N- to C-terminus: ATP-dependent Clp protease proteolytic subunit 2 (193 aa).

Ser-98 functions as the Nucleophile in the catalytic mechanism. Residue His-123 is part of the active site.

Belongs to the peptidase S14 family. Fourteen ClpP subunits assemble into 2 heptameric rings which stack back to back to give a disk-like structure with a central cavity, resembling the structure of eukaryotic proteasomes.

The protein localises to the cytoplasm. It catalyses the reaction Hydrolysis of proteins to small peptides in the presence of ATP and magnesium. alpha-casein is the usual test substrate. In the absence of ATP, only oligopeptides shorter than five residues are hydrolyzed (such as succinyl-Leu-Tyr-|-NHMec, and Leu-Tyr-Leu-|-Tyr-Trp, in which cleavage of the -Tyr-|-Leu- and -Tyr-|-Trp bonds also occurs).. In terms of biological role, cleaves peptides in various proteins in a process that requires ATP hydrolysis. Has a chymotrypsin-like activity. Plays a major role in the degradation of misfolded proteins. In Bacillus anthracis, this protein is ATP-dependent Clp protease proteolytic subunit 2.